We begin with the raw amino-acid sequence, 634 residues long: Fluorothreonine transaldolase (634 aa).

Pyridoxal 5'-phosphate contacts are provided by tyrosine 67, histidine 221, and histidine 247. At lysine 248 the chain carries N6-(pyridoxal phosphate)lysine. Arginine 375 lines the pyridoxal 5'-phosphate pocket. The tract at residues 428 to 456 (TGDPASAAGPPARERYAPPTAPAGHPARP) is disordered.

It belongs to the SHMT family. The cofactor is pyridoxal 5'-phosphate.

The enzyme catalyses fluoroacetaldehyde + L-threonine = 4-fluoro-L-threonine + acetaldehyde. Transaldolase that catalyzes the final step in 4-fluorothreonine biosynthesis. Mediates a L-threonine/fluoroaceldehyde to 4-fluoro-L-threonine/acetaldehyde crossover reaction. Can also convert chloroacetaldehyde into 4-chloro-L-threonine. Does not use glycine as a substrate. The protein is Fluorothreonine transaldolase of Streptantibioticus cattleyicolor (Streptomyces cattleya).